The sequence spans 478 residues: Catalase (478 aa).

Residues 1 to 23 (MTNQLTTNEGQPWADNQHSQTAG) are disordered. Residues His53 and Asn126 contribute to the active site. Residue Tyr336 coordinates heme.

It belongs to the catalase family. Heme is required as a cofactor.

It is found in the cytoplasm. It carries out the reaction 2 H2O2 = O2 + 2 H2O. Decomposes hydrogen peroxide into water and oxygen; serves to protect cells from the toxic effects of hydrogen peroxide. This is Catalase (katA) from Latilactobacillus sakei (Lactobacillus sakei).